The following is a 302-amino-acid chain: Nodulation protein D 3 (302 aa).

Positions leucine 6 to threonine 63 constitute an HTH lysR-type domain. The segment at residues leucine 23–arginine 42 is a DNA-binding region (H-T-H motif).

This sequence belongs to the LysR transcriptional regulatory family.

In terms of biological role, nodD regulates the expression of the nodABCFE genes which encode other nodulation proteins. NodD is also a negative regulator of its own expression. Binds flavonoids as inducers. In Rhizobium leguminosarum bv. phaseoli, this protein is Nodulation protein D 3 (nodD3).